A 621-amino-acid chain; its full sequence is UvrABC system protein C (621 aa).

A GIY-YIG domain is found at 20–98; that stretch reads MAPGVYCMYA…IKSLAPRYNV (79 aa). The 36-residue stretch at 207–242 folds into the UVR domain; the sequence is DLLAEELIQAMQVASEHLEFEQAARLRDLLTSLRSM.

The protein belongs to the UvrC family. In terms of assembly, interacts with UvrB in an incision complex.

The protein resides in the cytoplasm. In terms of biological role, the UvrABC repair system catalyzes the recognition and processing of DNA lesions. UvrC both incises the 5' and 3' sides of the lesion. The N-terminal half is responsible for the 3' incision and the C-terminal half is responsible for the 5' incision. This chain is UvrABC system protein C, found in Xylella fastidiosa (strain 9a5c).